The chain runs to 431 residues: Fumarylacetoacetase (431 aa).

D133 serves as a coordination point for Ca(2+). Position 135 (Y135) interacts with substrate. H140 (proton acceptor) is an active-site residue. R149 is a substrate binding site. Positions 209, 211, and 243 each coordinate Ca(2+). D243 contacts Mg(2+). Positions 250 and 254 each coordinate substrate. Mg(2+) is bound by residues K263 and T267. Position 362 (T362) interacts with substrate.

Belongs to the FAH family. It depends on Ca(2+) as a cofactor. Mg(2+) is required as a cofactor.

The enzyme catalyses 4-fumarylacetoacetate + H2O = acetoacetate + fumarate + H(+). Its pathway is amino-acid degradation; L-phenylalanine degradation; acetoacetate and fumarate from L-phenylalanine: step 6/6. Use of phenylalanine and phenylacetate as a carbon source. This Emericella nidulans (strain FGSC A4 / ATCC 38163 / CBS 112.46 / NRRL 194 / M139) (Aspergillus nidulans) protein is Fumarylacetoacetase (fahA).